The primary structure comprises 404 residues: Putative gustatory receptor 94a (404 aa).

The Cytoplasmic segment spans residues 1–11; the sequence is MDFTSDYAHRR. The helical transmembrane segment at 12–32 threads the bilayer; the sequence is MVKFLTIILIGFMTVFGLLAN. Residues 33–43 are Extracellular-facing; that stretch reads RYRAGRRERFR. Residues 44-64 traverse the membrane as a helical segment; that stretch reads FSKANLAFASLWAIAFSLVYG. The Cytoplasmic segment spans residues 65-133; sequence RQIYKEYQEG…RLDSRSLYIS (69 aa). Residues 134–154 form a helical membrane-spanning segment; sequence IVLALVKTVAFPLTIEVAFIL. Over 155-171 the chain is Extracellular; that stretch reads QQRRQHPEMSLIWTLYR. Residues 172–192 traverse the membrane as a helical segment; sequence LFPLIISNFLNNCYFGAMVVV. Residues 193–260 are Cytoplasmic-facing; sequence KEILYALNRR…HSGKYLTPMS (68 aa). Residues 261-281 traverse the membrane as a helical segment; the sequence is LSMILSLICHLLGITVGFYSL. The Extracellular portion of the chain corresponds to 282 to 296; that stretch reads YYAIADTLIMGKPYD. Residues 297–317 form a helical membrane-spanning segment; the sequence is GLGSLINLVFLSISLAEITLL. The Cytoplasmic segment spans residues 318-376; it reads THLCNHLLVATRRSAVILQEMNLQHADSRYRQAVHGFTLLVTVTKYQIKPLGLYELDMR. The helical transmembrane segment at 377 to 397 threads the bilayer; that stretch reads LISNVFSAVASFLLILVQADL. At 398–404 the chain is on the extracellular side; it reads SQRFKMQ.

Belongs to the insect chemoreceptor superfamily. Gustatory receptor (GR) family. Gr22e subfamily. In terms of tissue distribution, in larvae, is expressed in neurons of the terminal external chemosensory organ.

It is found in the cell membrane. Functionally, probable gustatory receptor which mediates acceptance or avoidance behavior, depending on its substrates. The chain is Putative gustatory receptor 94a (Gr94a) from Drosophila melanogaster (Fruit fly).